The chain runs to 359 residues: tRNA-specific 2-thiouridylase MnmA (359 aa).

Residues 7-14 and Met33 contribute to the ATP site; that span reads AMSGGVDS. Residue Cys101 is the Nucleophile of the active site. Cys101 and Cys198 are disulfide-bonded. Gly125 serves as a coordination point for ATP. The segment at 148-150 is interaction with tRNA; that stretch reads KDQ. Cys198 serves as the catalytic Cysteine persulfide intermediate.

Belongs to the MnmA/TRMU family.

Its subcellular location is the cytoplasm. The enzyme catalyses S-sulfanyl-L-cysteinyl-[protein] + uridine(34) in tRNA + AH2 + ATP = 2-thiouridine(34) in tRNA + L-cysteinyl-[protein] + A + AMP + diphosphate + H(+). Catalyzes the 2-thiolation of uridine at the wobble position (U34) of tRNA, leading to the formation of s(2)U34. The chain is tRNA-specific 2-thiouridylase MnmA from Chloroflexus aggregans (strain MD-66 / DSM 9485).